A 715-amino-acid chain; its full sequence is Fatty acid oxidation complex subunit alpha (715 aa).

An enoyl-CoA hydratase/isomerase region spans residues 1–190; that stretch reads MIYQGKAITV…KVGAVDAVVA (190 aa). Position 297 (D297) interacts with substrate. Residues 312–715 form a 3-hydroxyacyl-CoA dehydrogenase region; it reads KDVKLAAVLG…MAKNGQKFFG (404 aa). NAD(+)-binding positions include M325, D344, 401–403, K408, and S430; that span reads VVE. H451 functions as the For 3-hydroxyacyl-CoA dehydrogenase activity in the catalytic mechanism. Residue N454 coordinates NAD(+). Substrate contacts are provided by N501 and Y660.

It in the N-terminal section; belongs to the enoyl-CoA hydratase/isomerase family. In the C-terminal section; belongs to the 3-hydroxyacyl-CoA dehydrogenase family. In terms of assembly, heterotetramer of two alpha chains (FadB) and two beta chains (FadA).

It carries out the reaction a (3S)-3-hydroxyacyl-CoA + NAD(+) = a 3-oxoacyl-CoA + NADH + H(+). It catalyses the reaction a (3S)-3-hydroxyacyl-CoA = a (2E)-enoyl-CoA + H2O. The catalysed reaction is a 4-saturated-(3S)-3-hydroxyacyl-CoA = a (3E)-enoyl-CoA + H2O. The enzyme catalyses (3S)-3-hydroxybutanoyl-CoA = (3R)-3-hydroxybutanoyl-CoA. It carries out the reaction a (3Z)-enoyl-CoA = a 4-saturated (2E)-enoyl-CoA. It catalyses the reaction a (3E)-enoyl-CoA = a 4-saturated (2E)-enoyl-CoA. Its pathway is lipid metabolism; fatty acid beta-oxidation. Involved in the aerobic and anaerobic degradation of long-chain fatty acids via beta-oxidation cycle. Catalyzes the formation of 3-oxoacyl-CoA from enoyl-CoA via L-3-hydroxyacyl-CoA. It can also use D-3-hydroxyacyl-CoA and cis-3-enoyl-CoA as substrate. The chain is Fatty acid oxidation complex subunit alpha from Pseudomonas paraeruginosa (strain DSM 24068 / PA7) (Pseudomonas aeruginosa (strain PA7)).